The primary structure comprises 271 residues: Aminodeoxychorismate lyase (271 aa).

Residue K140 is modified to N6-(pyridoxal phosphate)lysine.

This sequence belongs to the class-IV pyridoxal-phosphate-dependent aminotransferase family. As to quaternary structure, homodimer. The cofactor is pyridoxal 5'-phosphate.

The enzyme catalyses 4-amino-4-deoxychorismate = 4-aminobenzoate + pyruvate + H(+). It participates in cofactor biosynthesis; tetrahydrofolate biosynthesis; 4-aminobenzoate from chorismate: step 2/2. Its function is as follows. Involved in the biosynthesis of p-aminobenzoate (PABA), a precursor of tetrahydrofolate. Converts 4-amino-4-deoxychorismate into 4-aminobenzoate (PABA) and pyruvate. This is Aminodeoxychorismate lyase (pabC) from Vibrio harveyi (Beneckea harveyi).